The chain runs to 319 residues: CCAAT/enhancer-binding protein homolog 1 (319 aa).

Positions Ser-53–Arg-67 are n' domain; required for axon regeneration. Positions Thr-163–Lys-319 are disordered. A compositionally biased stretch (basic and acidic residues) spans Val-171–Ser-181. The segment covering Glu-182 to Tyr-198 has biased composition (acidic residues). Composition is skewed to basic and acidic residues over residues Leu-225–Arg-248, Lys-255–Glu-274, Ser-281–Asp-291, and Pro-302–Lys-319. One can recognise a bZIP domain in the interval Glu-233–Met-308. Residues Lys-237–Arg-271 form a basic motif region. Residues Leu-275–Met-308 are leucine-zipper.

It belongs to the bZIP family. C/EBP subfamily. May interact with transcription factor ets-4. May interact (via N-terminus) with nipi-3. May interact (via N-terminus) with importin subunit alpha ima-3. As to expression, expressed in touch and motor neurons.

It localises to the synapse. The protein resides in the cytoplasm. The protein localises to the nucleus. It is found in the cell projection. Its subcellular location is the axon. Transcription factor. Binds to promoter regions of target genes, perhaps at the motif 5'-[AGCT]TT[AGT][TC]GAAA[ACT]-3'. Modulates expression of genes involved in development and in stress responses, including those regulating the p38/MAPK signaling pathways such as MAPKK sek-1 and phosphatase vhp-1. Involved in innate immunity. Plays a role in repressing the response to infection by the Gram-negative bacterium P.aeruginosa, perhaps acting independently of the pmk-1 or pmk-3 p38/MAPK pathways. However, also plays a protective role in the response to infection by P.aeruginosa. Required in axonal regrowth following injury and synaptogenesis. Following axon injury, in concert with transcription factor ets-4, activates expression of receptor tyrosine kinase svh-2. May function downstream of the Ca2+-activated p38/MAPK pathway to promote axon regeneration. Plays a role in modulating polymerization of neuronal microtubules. Involved in modulating lipid homeostasis. The protein is CCAAT/enhancer-binding protein homolog 1 of Caenorhabditis elegans.